The chain runs to 481 residues: Trigger factor (481 aa).

The PPIase FKBP-type domain maps to 161–298 (GDQLTATVQT…VSEIQNRQLP (138 aa)). Positions 173-245 (DGVPLHKLDE…PTTLIMEERR (73 aa)) are disordered. Residues 182 to 235 (EEDDDDDDDDDDDDDDDDDDDDDDDDDDDDDDDDDDDDDDDDDDDDDDDDDEGE) are compositionally biased toward acidic residues.

Belongs to the FKBP-type PPIase family. Tig subfamily.

Its subcellular location is the cytoplasm. It catalyses the reaction [protein]-peptidylproline (omega=180) = [protein]-peptidylproline (omega=0). Functionally, involved in protein export. Acts as a chaperone by maintaining the newly synthesized protein in an open conformation. Functions as a peptidyl-prolyl cis-trans isomerase. The protein is Trigger factor of Herpetosiphon aurantiacus (strain ATCC 23779 / DSM 785 / 114-95).